Here is an 884-residue protein sequence, read N- to C-terminus: Alanine--tRNA ligase (884 aa).

Zn(2+)-binding residues include His574, His578, Cys675, and His679.

The protein belongs to the class-II aminoacyl-tRNA synthetase family. Zn(2+) serves as cofactor.

The protein resides in the cytoplasm. It carries out the reaction tRNA(Ala) + L-alanine + ATP = L-alanyl-tRNA(Ala) + AMP + diphosphate. In terms of biological role, catalyzes the attachment of alanine to tRNA(Ala) in a two-step reaction: alanine is first activated by ATP to form Ala-AMP and then transferred to the acceptor end of tRNA(Ala). Also edits incorrectly charged Ser-tRNA(Ala) and Gly-tRNA(Ala) via its editing domain. This Ralstonia nicotianae (strain ATCC BAA-1114 / GMI1000) (Ralstonia solanacearum) protein is Alanine--tRNA ligase.